The sequence spans 276 residues: MGIRSYRPYTPGTREASVSDFAEITKTEPEKSLTTYKHSRQGRNNRGVITSRHRGGGHKRLYRIVDFRRDKHNIPAKVAAIEYDPNRNARIALLFYKDGEKRYILAPAGITVGTMVVSGENAPFEVGNALPLARIPLGTDVHNIELTPGKGGQMVRAAGGSAQVVAKEGDYVTLRLPSKEVRMVRKECYATIGRVGNVEDRNIKLGKAGRTRHLGQRPHVRGSVMNPVDHPHGGGEGRAPIGRSGPVTPWGKPALGAKTRNKKKQSSKLIVRRRTR.

2 disordered regions span residues 29–55 (PEKSLTTYKHSRQGRNNRGVITSRHRG) and 219–276 (HVRG…RRTR). Over residues 259–276 (TRNKKKQSSKLIVRRRTR) the composition is skewed to basic residues.

Belongs to the universal ribosomal protein uL2 family. Part of the 50S ribosomal subunit. Forms a bridge to the 30S subunit in the 70S ribosome.

Functionally, one of the primary rRNA binding proteins. Required for association of the 30S and 50S subunits to form the 70S ribosome, for tRNA binding and peptide bond formation. It has been suggested to have peptidyltransferase activity; this is somewhat controversial. Makes several contacts with the 16S rRNA in the 70S ribosome. In Rippkaea orientalis (strain PCC 8801 / RF-1) (Cyanothece sp. (strain PCC 8801)), this protein is Large ribosomal subunit protein uL2.